Reading from the N-terminus, the 214-residue chain is ATP phosphoribosyltransferase (214 aa).

Belongs to the ATP phosphoribosyltransferase family. Short subfamily. In terms of assembly, heteromultimer composed of HisG and HisZ subunits.

It is found in the cytoplasm. The catalysed reaction is 1-(5-phospho-beta-D-ribosyl)-ATP + diphosphate = 5-phospho-alpha-D-ribose 1-diphosphate + ATP. It participates in amino-acid biosynthesis; L-histidine biosynthesis; L-histidine from 5-phospho-alpha-D-ribose 1-diphosphate: step 1/9. Functionally, catalyzes the condensation of ATP and 5-phosphoribose 1-diphosphate to form N'-(5'-phosphoribosyl)-ATP (PR-ATP). Has a crucial role in the pathway because the rate of histidine biosynthesis seems to be controlled primarily by regulation of HisG enzymatic activity. This Azoarcus sp. (strain BH72) protein is ATP phosphoribosyltransferase.